A 341-amino-acid polypeptide reads, in one-letter code: Eukaryotic translation initiation factor 3 subunit I (341 aa).

5 WD repeats span residues 8-49 (GHER…GTYH), 50-91 (GHQG…HTWE), 145-184 (CDES…QLHS), 189-228 (DMGS…VLKT), and 286-325 (GHFG…FDFM).

This sequence belongs to the eIF-3 subunit I family. Component of the eukaryotic translation initiation factor 3 (eIF-3) complex.

The protein resides in the cytoplasm. In terms of biological role, component of the eukaryotic translation initiation factor 3 (eIF-3) complex, which is involved in protein synthesis of a specialized repertoire of mRNAs and, together with other initiation factors, stimulates binding of mRNA and methionyl-tRNAi to the 40S ribosome. The eIF-3 complex specifically targets and initiates translation of a subset of mRNAs involved in cell proliferation. The polypeptide is Eukaryotic translation initiation factor 3 subunit I (Pyricularia oryzae (strain 70-15 / ATCC MYA-4617 / FGSC 8958) (Rice blast fungus)).